The chain runs to 285 residues: Malectin (285 aa).

A signal peptide spans 1-26 (MRRVTLHCAARLVIAALWLLVEVCRA). Over 27–262 (ESGAQSLAER…TPNPYATDNS (236 aa)) the chain is Lumenal. Positions 71, 93, 120, 121, and 190 each coordinate a carbohydrate. Residues 209–258 (KLQPHPGLEKREEEEEEEEEGEGPEGEKKSASTSPKNPVRSGPRTPNPYA) form a disordered region. Residues 220-232 (EEEEEEEEEGEGP) show a composition bias toward acidic residues. Residue Asn261 is glycosylated (N-linked (GlcNAc...) asparagine). The helical transmembrane segment at 263–283 (SLMFPILVAFGVFIPTLFCLC) threads the bilayer. The Cytoplasmic segment spans residues 284 to 285 (RL).

Belongs to the malectin family.

The protein localises to the endoplasmic reticulum membrane. Functionally, carbohydrate-binding protein with a strong ligand preference for Glc2-N-glycan. May play a role in the early steps of protein N-glycosylation. In Danio rerio (Zebrafish), this protein is Malectin.